A 514-amino-acid chain; its full sequence is L-Threonine dehydratase biosynthetic IlvA (514 aa).

Lys62 bears the N6-(pyridoxal phosphate)lysine mark. Pyridoxal 5'-phosphate is bound by residues Asn89, 188-192 (GGGGL), and Ser315. ACT-like domains follow at residues 339-411 (ALLA…DLSD) and 434-504 (RLYS…DESN).

The protein belongs to the serine/threonine dehydratase family. As to quaternary structure, homotetramer. Requires pyridoxal 5'-phosphate as cofactor.

The enzyme catalyses L-threonine = 2-oxobutanoate + NH4(+). It functions in the pathway amino-acid biosynthesis; L-isoleucine biosynthesis; 2-oxobutanoate from L-threonine: step 1/1. Its activity is regulated as follows. Isoleucine allosterically inhibits whereas valine allosterically activates this enzyme. Functionally, catalyzes the anaerobic formation of alpha-ketobutyrate and ammonia from threonine in a two-step reaction. The first step involved a dehydration of threonine and a production of enamine intermediates (aminocrotonate), which tautomerizes to its imine form (iminobutyrate). Both intermediates are unstable and short-lived. The second step is the nonenzymatic hydrolysis of the enamine/imine intermediates to form 2-ketobutyrate and free ammonia. In the low water environment of the cell, the second step is accelerated by RidA. The chain is L-Threonine dehydratase biosynthetic IlvA (ilvA) from Salmonella typhimurium (strain LT2 / SGSC1412 / ATCC 700720).